The chain runs to 330 residues: SUMO-activating enzyme subunit 1 (330 aa).

Belongs to the ubiquitin-activating E1 family. As to quaternary structure, heterodimer of sae1 and sae2. The complex binds sumo via sae2.

Its subcellular location is the nucleus. It functions in the pathway protein modification; protein sumoylation. Its function is as follows. The dimeric enzyme acts as an E1 ligase for sumo. It mediates ATP-dependent activation of sumo and formation of a thioester with a conserved cysteine residue on sae2. This is SUMO-activating enzyme subunit 1 (sae1) from Dictyostelium discoideum (Social amoeba).